We begin with the raw amino-acid sequence, 141 residues long: Protein E6 (141 aa).

2 zinc fingers span residues Cys-27–Cys-64 and Cys-101–Cys-137.

The protein belongs to the papillomaviridae E6 protein family. As to quaternary structure, forms homodimers. Interacts with ubiquitin-protein ligase UBE3A/E6-AP; this interaction stimulates UBE3A ubiquitin activity. Interacts with host BAK1.

Its subcellular location is the host cytoplasm. It is found in the host nucleus. Functionally, plays a major role in the induction and maintenance of cellular transformation. E6 associates with host UBE3A/E6-AP ubiquitin-protein ligase and modulates its activity. Protects host keratinocytes from apoptosis by mediating the degradation of host BAK1. May also inhibit host immune response. This chain is Protein E6, found in Human papillomavirus 17.